The following is a 256-amino-acid chain: Protein FixA (256 aa).

The protein belongs to the ETF beta-subunit/FixA family. In terms of assembly, heterodimer of FixA and FixB.

It participates in amine and polyamine metabolism; carnitine metabolism. In terms of biological role, required for anaerobic carnitine reduction. May bring reductant to CaiA. The polypeptide is Protein FixA (Escherichia coli O17:K52:H18 (strain UMN026 / ExPEC)).